Reading from the N-terminus, the 210-residue chain is Claudin-4 (210 aa).

Residues 1–7 (MASMGLQ) lie on the Cytoplasmic side of the membrane. Positions 1–103 (MASMGLQVMG…GVLLSVVGGK (103 aa)) are interaction with EPHA2. Residues 8 to 28 (VMGIALAVLGWLGAILSCALP) form a helical membrane-spanning segment. The Extracellular portion of the chain corresponds to 29–81 (MWRVTAFIGSNIVTSQTIWEGLWMNCVVQSTGQMQCKVYDSLLALPQDLQAAR). Residues C54 and C64 are joined by a disulfide bond. The chain crosses the membrane as a helical span at residues 82-102 (ALMVVSIILAALGVLLSVVGG). The Cytoplasmic portion of the chain corresponds to 103 to 117 (KCTNCVEDESAKAKT). A helical transmembrane segment spans residues 118 to 138 (MIVAGVVFLLAGLLVMVPASW). Over 139-160 (TANNIIRDFYNPLVVSGQKREM) the chain is Extracellular. Residues 161-181 (GASLYVGWAASGLLLLGGALL) form a helical membrane-spanning segment. Over 182–210 (CCNCPPRADKPYSAKYSAAARSAPASNYV) the chain is Cytoplasmic. A Phosphotyrosine modification is found at Y209. An interactions with TJP1, TJP2 and TJP3 region spans residues 209–210 (YV).

The protein belongs to the claudin family. In terms of assembly, can form heteropolymeric strands with other claudins. Interacts with CLDN8. Interacts with CLDN1. Directly interacts with TJP1/ZO-1. Interacts with TJP2/ZO-2 and TJP3/ZO-3. Interacts with EPHA2; phosphorylates CLDN4 and may regulate tight junctions. Phosphorylated. Phosphorylation by EPHA2 is stimulated by EFNA1 and alters interaction with TJP1.

The protein localises to the cell junction. The protein resides in the tight junction. It is found in the cell membrane. It catalyses the reaction chloride(in) = chloride(out). The catalysed reaction is bromide(in) = bromide(out). It carries out the reaction iodide(out) = iodide(in). The enzyme catalyses fluoride(in) = fluoride(out). Functionally, can associate with other claudins to regulate tight junction structural and functional strand dynamics. May coassemble with CLDN8 into tight junction strands containing anion-selective channels that convey paracellular chloride permeability in renal collecting ducts. May integrate into CLDN3 strands to modulate localized tight junction barrier properties. May disrupt strand assembly of channel-forming CLDN2 and CLDN15 and inhibit cation conductance. Cannot form tight junction strands on its own. This Canis lupus familiaris (Dog) protein is Claudin-4 (CLDN4).